The sequence spans 399 residues: Acetylornithine aminotransferase (399 aa).

Pyridoxal 5'-phosphate-binding positions include Gly-99–Ala-100 and Phe-132. Arg-135 is a N(2)-acetyl-L-ornithine binding site. Asp-217–Gln-220 contacts pyridoxal 5'-phosphate. At Lys-246 the chain carries N6-(pyridoxal phosphate)lysine. N(2)-acetyl-L-ornithine is bound at residue Thr-274. A pyridoxal 5'-phosphate-binding site is contributed by Thr-275.

Belongs to the class-III pyridoxal-phosphate-dependent aminotransferase family. ArgD subfamily. As to quaternary structure, homodimer. Requires pyridoxal 5'-phosphate as cofactor.

The protein resides in the cytoplasm. The catalysed reaction is N(2)-acetyl-L-ornithine + 2-oxoglutarate = N-acetyl-L-glutamate 5-semialdehyde + L-glutamate. It participates in amino-acid biosynthesis; L-arginine biosynthesis; N(2)-acetyl-L-ornithine from L-glutamate: step 4/4. In Agrobacterium fabrum (strain C58 / ATCC 33970) (Agrobacterium tumefaciens (strain C58)), this protein is Acetylornithine aminotransferase.